Consider the following 154-residue polypeptide: Putative ankyrin repeat protein RBE_1220 (154 aa).

ANK repeat units follow at residues 78 to 108 and 113 to 142; these read EKVN…NVDQ and NSRT…ILIL.

The chain is Putative ankyrin repeat protein RBE_1220 from Rickettsia bellii (strain RML369-C).